A 216-amino-acid polypeptide reads, in one-letter code: Large ribosomal subunit protein uL3 (216 aa).

Positions 136 to 155 (GVSISHRSHGSTGQRQDPGK) are disordered. N5-methylglutamine is present on Gln151.

Belongs to the universal ribosomal protein uL3 family. As to quaternary structure, part of the 50S ribosomal subunit. Forms a cluster with proteins L14 and L19. Post-translationally, methylated by PrmB.

Functionally, one of the primary rRNA binding proteins, it binds directly near the 3'-end of the 23S rRNA, where it nucleates assembly of the 50S subunit. The protein is Large ribosomal subunit protein uL3 of Rickettsia prowazekii (strain Madrid E).